Consider the following 474-residue polypeptide: Vasculin-like protein 1 (474 aa).

The tract at residues 17-42 (QSAKSPTATFEKHGEHLPRGEGRFGV) is disordered. Residues 26-38 (FEKHGEHLPRGEG) show a composition bias toward basic and acidic residues. Residues Ser49 and Ser76 each carry the phosphoserine modification. The disordered stretch occupies residues 91–191 (GNPSGWHSSS…VWENPPSAKQ (101 aa)). Residues 116–128 (NHRHWNGSFHSRK) are compositionally biased toward basic residues. The span at 136 to 154 (PPMEIREEKKEDKVEKLQF) shows a compositional bias: basic and acidic residues. The residue at position 202 (Ser202) is a Phosphoserine. The segment at 238 to 371 (LVPKPVPPPS…EEGCHQNGLA (134 aa)) is disordered. Residues 262–277 (GSLSSSRESAFTSPIS) are compositionally biased toward polar residues. The span at 291–312 (SSPKESPSSTTPPIEISSSRLT) shows a compositional bias: low complexity. At Ser292 the chain carries Phosphoserine. At Thr301 the chain carries Phosphothreonine. 2 stretches are compositionally biased toward basic and acidic residues: residues 317–346 (RTTD…CDKL) and 356–365 (EPKENGEEGC). A Phosphoserine modification is found at Ser382. Residues 453 to 474 (AEFEDSDTETSSSETSDDDAWK) form a disordered region.

It belongs to the vasculin family.

Its subcellular location is the nucleus. Its function is as follows. Possible transcription factor. This is Vasculin-like protein 1 (GPBP1L1) from Homo sapiens (Human).